The following is a 124-amino-acid chain: Small ribosomal subunit protein uS12 (124 aa).

The tract at residues methionine 1–proline 42 is disordered. Positions arginine 9–lysine 18 are enriched in basic residues. A compositionally biased stretch (polar residues) spans asparagine 27–proline 42. Position 89 is a 3-methylthioaspartic acid (aspartate 89).

It belongs to the universal ribosomal protein uS12 family. As to quaternary structure, part of the 30S ribosomal subunit. Contacts proteins S8 and S17. May interact with IF1 in the 30S initiation complex.

Its function is as follows. With S4 and S5 plays an important role in translational accuracy. Interacts with and stabilizes bases of the 16S rRNA that are involved in tRNA selection in the A site and with the mRNA backbone. Located at the interface of the 30S and 50S subunits, it traverses the body of the 30S subunit contacting proteins on the other side and probably holding the rRNA structure together. The combined cluster of proteins S8, S12 and S17 appears to hold together the shoulder and platform of the 30S subunit. In Tropheryma whipplei (strain TW08/27) (Whipple's bacillus), this protein is Small ribosomal subunit protein uS12.